Reading from the N-terminus, the 284-residue chain is Tryptophan 2,3-dioxygenase (284 aa).

Residues 51-55 (FIIQH), Y113, and R117 each bind substrate. H240 is a binding site for heme. T254 contributes to the substrate binding site.

The protein belongs to the tryptophan 2,3-dioxygenase family. Homotetramer. The cofactor is heme.

It catalyses the reaction L-tryptophan + O2 = N-formyl-L-kynurenine. The protein operates within amino-acid degradation; L-tryptophan degradation via kynurenine pathway; L-kynurenine from L-tryptophan: step 1/2. Heme-dependent dioxygenase that catalyzes the oxidative cleavage of the L-tryptophan (L-Trp) pyrrole ring and converts L-tryptophan to N-formyl-L-kynurenine. Catalyzes the oxidative cleavage of the indole moiety. In Rhodococcus jostii (strain RHA1), this protein is Tryptophan 2,3-dioxygenase.